Reading from the N-terminus, the 1025-residue chain is Retrovirus-related Pol polyprotein from type-1 retrotransposable element R2 (1025 aa).

Residues 1-11 are compositionally biased toward polar residues; that stretch reads NQIKKSNTSTG. Residues 1–38 form a disordered region; sequence NQIKKSNTSTGARIPKAMTNPADNFAGGQWKPPGRRSA. Residues 46–69 form a C2H2-type zinc finger; that stretch reads FVCEHCLRAFTTNTGRGLHIKRAH. Over residues 146–158 the composition is skewed to basic and acidic residues; it reads NRARETELTRLET. The tract at residues 146–172 is disordered; that stretch reads NRARETELTRLETADEDPASQEQDNPN. A Reverse transcriptase domain is found at 358–635; the sequence is MIMYHGQCPR…DQWKYLGVVY (278 aa). Residues 755–1025 are nucleic acid-binding endonuclease; it reads SLLGGDWVAE…YRTERRRTAN (271 aa).

It carries out the reaction DNA(n) + a 2'-deoxyribonucleoside 5'-triphosphate = DNA(n+1) + diphosphate. The polypeptide is Retrovirus-related Pol polyprotein from type-1 retrotransposable element R2 (Nasonia vitripennis (Parasitic wasp)).